The sequence spans 274 residues: Small ribosomal subunit protein uS3 (274 aa).

Positions 38–106 constitute a KH type-2 domain; the sequence is IRRLLSSGLE…QVQLNILEVK (69 aa). The disordered stretch occupies residues 215–274; it reads AAAAPAGADRPRRERPSGTRPRRSGASGTTATGTDAGRAAGGEEAAPDAAAPVEAQSTES. The segment covering 238–266 has biased composition (low complexity); sequence SGASGTTATGTDAGRAAGGEEAAPDAAAP.

This sequence belongs to the universal ribosomal protein uS3 family. Part of the 30S ribosomal subunit. Forms a tight complex with proteins S10 and S14.

Its function is as follows. Binds the lower part of the 30S subunit head. Binds mRNA in the 70S ribosome, positioning it for translation. The chain is Small ribosomal subunit protein uS3 from Mycobacterium tuberculosis (strain ATCC 25177 / H37Ra).